We begin with the raw amino-acid sequence, 486 residues long: Sensor protein PhoQ (486 aa).

At 1–16 (MKKLLHLFFPLSLRVR) the chain is on the cytoplasmic side. Residues 17-37 (FLLATAAVVLVLSLAYGMVAL) traverse the membrane as a helical segment. The Periplasmic segment spans residues 38–194 (IGYSVSFDKT…LKSSYMVWSW (157 aa)). Positions 151 and 152 each coordinate a divalent metal cation. Residues 195–215 (FIYVLSANLLLVIPLLWVAAW) form a helical membrane-spanning segment. Positions 215–266 (WWSLRPIEALAKEVRELEEHNRELLNPATTRELTSLVRNLNRLLKSERERYD) constitute an HAMP domain. Residues 216 to 486 (WSLRPIEALA…GRQHSAPKDE (271 aa)) are Cytoplasmic-facing. The Histidine kinase domain maps to 274 to 480 (DLTHSLKTPL…RMEVIFGRQH (207 aa)). At His277 the chain carries Phosphohistidine; by autocatalysis. Asn385 is a Mg(2+) binding site. Residues 385-393 (NVLDNACKY), 415-420 (DDGPGI), and 434-446 (RVDT…GVGL) contribute to the ATP site. Gln442 serves as a coordination point for Mg(2+).

As to quaternary structure, homodimer.

It localises to the cell inner membrane. The enzyme catalyses ATP + protein L-histidine = ADP + protein N-phospho-L-histidine.. Its function is as follows. Member of the two-component regulatory system PhoP/PhoQ involved in virulence, adaptation to low Mg(2+) environments and the control of acid resistance genes. In low periplasmic Mg(2+), PhoQ functions as a membrane-associated protein kinase that undergoes autophosphorylation and subsequently transfers the phosphate to PhoP, resulting in the expression of PhoP-activated genes (PAG) and repression of PhoP-repressed genes (PRG). In high periplasmic Mg(2+), acts as a protein phosphatase that dephosphorylates phospho-PhoP, which results in the repression of PG and may lead to expression of some PRG. The protein is Sensor protein PhoQ (phoQ) of Escherichia coli O6:H1 (strain CFT073 / ATCC 700928 / UPEC).